A 314-amino-acid chain; its full sequence is Probable cell division protein WhiA (314 aa).

A DNA-binding region (H-T-H motif) is located at residues 275–309; that stretch reads SLKELGELVTSGAISKSGVNHRLKKIDEFAEKIKR.

Belongs to the WhiA family.

Involved in cell division and chromosome segregation. The chain is Probable cell division protein WhiA from Oceanobacillus iheyensis (strain DSM 14371 / CIP 107618 / JCM 11309 / KCTC 3954 / HTE831).